The primary structure comprises 401 residues: MSIDINWDTLTGGADGAARAETIRAFIHDKFQQVTLPKFIRSVHVHSFDFGSASPEIEIKDICDPLPDFYEEDEDYPDNEDDDDDEAGLDSNPRNKCITRKGTNFKSVAISLVARQFETSHQSALTPGIPGGTSNINYFHLPLSAGLSGATTPLAAVAGAQLQGWLDNPYGRPSTPTNMRRLRHAASFNSLTLTPQSHPDPSSRPSSRHQHDDERRRSLAESDDASSQHGYDRTPSVSPHPMREKSPEDIQVVAHVQYSGDIKMSLTAEILLDYPMQSFVGIPLKLNITGLTFDGVALLAYIKRRAHFCFLSPDDAEALVGSDAGFNGLQTDSNGENAQPVQRPKIGGLLENIRVESEIGGQGSGKQVLKNVGKVESFVLEQVRRIFEDEFVYPSFWTFLV.

Positions 1–401 constitute an SMP-LTD domain; it reads MSIDINWDTL…VYPSFWTFLV (401 aa). Over residues 70 to 88 the composition is skewed to acidic residues; the sequence is YEEDEDYPDNEDDDDDEAG. Disordered regions lie at residues 70–95 and 190–247; these read YEEDEDYPDNEDDDDDEAGLDSNPRN and SLTL…EKSP. Residues 195-205 are compositionally biased toward low complexity; that stretch reads PQSHPDPSSRP. Over residues 209–220 the composition is skewed to basic and acidic residues; that stretch reads HQHDDERRRSLA.

The protein belongs to the MDM12 family. Component of the ER-mitochondria encounter structure (ERMES) or MDM complex, composed of MMM1, MDM10, MDM12 and MDM34. An MMM1 homodimer associates with one molecule of MDM12 on each side in a pairwise head-to-tail manner, and the SMP-LTD domains of MMM1 and MDM12 generate a continuous hydrophobic tunnel for phospholipid trafficking.

It is found in the mitochondrion outer membrane. The protein localises to the endoplasmic reticulum membrane. Its function is as follows. Component of the ERMES/MDM complex, which serves as a molecular tether to connect the endoplasmic reticulum (ER) and mitochondria. Components of this complex are involved in the control of mitochondrial shape and protein biogenesis, and function in nonvesicular lipid trafficking between the ER and mitochondria. MDM12 is required for the interaction of the ER-resident membrane protein MMM1 and the outer mitochondrial membrane-resident beta-barrel protein MDM10. The MDM12-MMM1 subcomplex functions in the major beta-barrel assembly pathway that is responsible for biogenesis of all mitochondrial outer membrane beta-barrel proteins, and acts in a late step after the SAM complex. The MDM10-MDM12-MMM1 subcomplex further acts in the TOM40-specific pathway after the action of the MDM12-MMM1 complex. Essential for establishing and maintaining the structure of mitochondria and maintenance of mtDNA nucleoids. This chain is Mitochondrial distribution and morphology protein 12, found in Phaeosphaeria nodorum (strain SN15 / ATCC MYA-4574 / FGSC 10173) (Glume blotch fungus).